The sequence spans 286 residues: Polyamine aminopropyltransferase (286 aa).

One can recognise a PABS domain in the interval 5–238 (TMWHETLHDQ…GIMTFAWATD (234 aa)). Gln33 provides a ligand contact to S-methyl-5'-thioadenosine. Positions 64 and 88 each coordinate spermidine. S-methyl-5'-thioadenosine-binding positions include Glu108 and 140 to 141 (DG). The Proton acceptor role is filled by Asp158. 158–161 (DCTD) is a binding site for spermidine. Position 165 (Pro165) interacts with S-methyl-5'-thioadenosine.

The protein belongs to the spermidine/spermine synthase family. As to quaternary structure, homodimer or homotetramer.

The protein localises to the cytoplasm. The enzyme catalyses S-adenosyl 3-(methylsulfanyl)propylamine + putrescine = S-methyl-5'-thioadenosine + spermidine + H(+). Its pathway is amine and polyamine biosynthesis; spermidine biosynthesis; spermidine from putrescine: step 1/1. In terms of biological role, catalyzes the irreversible transfer of a propylamine group from the amino donor S-adenosylmethioninamine (decarboxy-AdoMet) to putrescine (1,4-diaminobutane) to yield spermidine. This Salmonella schwarzengrund (strain CVM19633) protein is Polyamine aminopropyltransferase.